Here is a 516-residue protein sequence, read N- to C-terminus: GMP synthase [glutamine-hydrolyzing] (516 aa).

Residues 8 to 198 (KILILDFGSQ…ALNICKCDAL (191 aa)) enclose the Glutamine amidotransferase type-1 domain. Residue cysteine 84 is the Nucleophile of the active site. Catalysis depends on residues histidine 172 and glutamate 174. A GMPS ATP-PPase domain is found at 199-391 (WNIENIIEND…LGLPYNMLYR (193 aa)). Residue 226 to 232 (SGGVDSS) coordinates ATP.

In terms of assembly, homodimer.

The enzyme catalyses XMP + L-glutamine + ATP + H2O = GMP + L-glutamate + AMP + diphosphate + 2 H(+). Its pathway is purine metabolism; GMP biosynthesis; GMP from XMP (L-Gln route): step 1/1. In terms of biological role, catalyzes the synthesis of GMP from XMP. This is GMP synthase [glutamine-hydrolyzing] from Francisella philomiragia subsp. philomiragia (strain ATCC 25017 / CCUG 19701 / FSC 153 / O#319-036).